The primary structure comprises 134 residues: Profilin-3 (134 aa).

A disulfide bridge connects residues cysteine 13 and cysteine 118. The Involved in PIP2 interaction motif lies at 84 to 100; the sequence is AVIRGKKGSGGITIKKT. Position 114 is a phosphothreonine (threonine 114).

The protein belongs to the profilin family. In terms of assembly, occurs in many kinds of cells as a complex with monomeric actin in a 1:1 ratio. In terms of processing, phosphorylated by MAP kinases.

It localises to the cytoplasm. It is found in the cytoskeleton. Binds to actin and affects the structure of the cytoskeleton. At high concentrations, profilin prevents the polymerization of actin, whereas it enhances it at low concentrations. The protein is Profilin-3 of Olea europaea (Common olive).